The following is a 312-amino-acid chain: MLNSESLLRELRDALHEGGLTGSFLVRDLYTGEELGIDPDTELPTASLVKLPLALATLERIRLGEVDGAQQIEVAPGRITTPGPTGLSRFRHPARVAVDDLLYLSTSVSDGTASDALFEITPPAQVEQMVREWGFRDLTVRHSMRELSETPAERFESADAHLAHALAISAGTSGRGHRVPQLDVARANTGTARAFVDLLEALWAPVLTGPRPGRTSRALPPEPAARLRELMAANLLRHRLAPDFASDAATWSSKTGTLLNLRHEVGVVEHADGQVFAVAVLTESQVPADSQPGAEALMAQVARRLRDRLREW.

In Streptomyces cacaoi, this protein is Beta-lactamase regulatory protein BlaB (blaB).